A 273-amino-acid chain; its full sequence is Dermonecrotic toxin LhSicTox-alphaIA1i (273 aa).

Residue H5 is part of the active site. Residues E25 and D27 each coordinate Mg(2+). H41 functions as the Nucleophile in the catalytic mechanism. 2 disulfides stabilise this stretch: C45–C51 and C47–C190. D85 contacts Mg(2+).

Belongs to the arthropod phospholipase D family. Class II subfamily. The cofactor is Mg(2+). As to expression, expressed by the venom gland.

The protein localises to the secreted. It carries out the reaction an N-(acyl)-sphingosylphosphocholine = an N-(acyl)-sphingosyl-1,3-cyclic phosphate + choline. The catalysed reaction is an N-(acyl)-sphingosylphosphoethanolamine = an N-(acyl)-sphingosyl-1,3-cyclic phosphate + ethanolamine. The enzyme catalyses a 1-acyl-sn-glycero-3-phosphocholine = a 1-acyl-sn-glycero-2,3-cyclic phosphate + choline. It catalyses the reaction a 1-acyl-sn-glycero-3-phosphoethanolamine = a 1-acyl-sn-glycero-2,3-cyclic phosphate + ethanolamine. Its function is as follows. Dermonecrotic toxins cleave the phosphodiester linkage between the phosphate and headgroup of certain phospholipids (sphingolipid and lysolipid substrates), forming an alcohol (often choline) and a cyclic phosphate. This toxin acts on sphingomyelin (SM). It may also act on ceramide phosphoethanolamine (CPE), lysophosphatidylcholine (LPC) and lysophosphatidylethanolamine (LPE), but not on lysophosphatidylserine (LPS), and lysophosphatidylglycerol (LPG). It acts by transphosphatidylation, releasing exclusively cyclic phosphate products as second products. Induces dermonecrosis, hemolysis, increased vascular permeability, edema, inflammatory response, and platelet aggregation. The polypeptide is Dermonecrotic toxin LhSicTox-alphaIA1i (Loxosceles hirsuta (Recluse spider)).